Reading from the N-terminus, the 422-residue chain is Interferon-induced protein 44 (422 aa).

In terms of domain architecture, TLDc spans 1 to 147 (MAMRTRLTWQ…IQECEAFRCE (147 aa)).

Belongs to the IFI44 family.

It localises to the cytoplasm. Functionally, this protein aggregates to form microtubular structures. The polypeptide is Interferon-induced protein 44 (Ifi44) (Mus musculus (Mouse)).